The primary structure comprises 349 residues: Ribosomal RNA small subunit methyltransferase H 2 (349 aa).

S-adenosyl-L-methionine is bound by residues 80–82 (GGH), Asp-100, Phe-130, Asp-149, and Gln-156.

The protein belongs to the methyltransferase superfamily. RsmH family.

It is found in the cytoplasm. The catalysed reaction is cytidine(1402) in 16S rRNA + S-adenosyl-L-methionine = N(4)-methylcytidine(1402) in 16S rRNA + S-adenosyl-L-homocysteine + H(+). Its function is as follows. Specifically methylates the N4 position of cytidine in position 1402 (C1402) of 16S rRNA. This is Ribosomal RNA small subunit methyltransferase H 2 from Alkaliphilus metalliredigens (strain QYMF).